Reading from the N-terminus, the 394-residue chain is 1-deoxy-D-xylulose 5-phosphate reductoisomerase (394 aa).

Positions 13, 14, 15, 16, 40, 41, and 127 each coordinate NADPH. Lysine 128 lines the 1-deoxy-D-xylulose 5-phosphate pocket. Glutamate 129 lines the NADPH pocket. Aspartate 153 contributes to the Mn(2+) binding site. Residues serine 154, glutamate 155, serine 184, and histidine 207 each coordinate 1-deoxy-D-xylulose 5-phosphate. Glutamate 155 serves as a coordination point for Mn(2+). Glycine 213 contacts NADPH. 1-deoxy-D-xylulose 5-phosphate contacts are provided by serine 220, asparagine 225, lysine 226, and glutamate 229. Residue glutamate 229 coordinates Mn(2+).

This sequence belongs to the DXR family. Mg(2+) serves as cofactor. It depends on Mn(2+) as a cofactor.

The catalysed reaction is 2-C-methyl-D-erythritol 4-phosphate + NADP(+) = 1-deoxy-D-xylulose 5-phosphate + NADPH + H(+). Its pathway is isoprenoid biosynthesis; isopentenyl diphosphate biosynthesis via DXP pathway; isopentenyl diphosphate from 1-deoxy-D-xylulose 5-phosphate: step 1/6. Its function is as follows. Catalyzes the NADPH-dependent rearrangement and reduction of 1-deoxy-D-xylulose-5-phosphate (DXP) to 2-C-methyl-D-erythritol 4-phosphate (MEP). The polypeptide is 1-deoxy-D-xylulose 5-phosphate reductoisomerase (Chromobacterium violaceum (strain ATCC 12472 / DSM 30191 / JCM 1249 / CCUG 213 / NBRC 12614 / NCIMB 9131 / NCTC 9757 / MK)).